A 110-amino-acid polypeptide reads, in one-letter code: Phosphoribosyl-ATP pyrophosphatase (110 aa).

It belongs to the PRA-PH family.

It is found in the cytoplasm. The enzyme catalyses 1-(5-phospho-beta-D-ribosyl)-ATP + H2O = 1-(5-phospho-beta-D-ribosyl)-5'-AMP + diphosphate + H(+). It functions in the pathway amino-acid biosynthesis; L-histidine biosynthesis; L-histidine from 5-phospho-alpha-D-ribose 1-diphosphate: step 2/9. This chain is Phosphoribosyl-ATP pyrophosphatase, found in Pseudomonas syringae pv. syringae (strain B728a).